A 1891-amino-acid chain; its full sequence is TATA-binding protein-associated factor mot1 (1891 aa).

Residues proline 30–threonine 68 form an HEAT 1 repeat. 3 disordered regions span residues phenylalanine 184–arginine 216, leucine 241–serine 283, and phenylalanine 295–asparagine 316. Positions glutamate 264 to proline 275 are enriched in basic and acidic residues. HEAT repeat units follow at residues serine 473–lysine 511 and serine 569–glutamate 606. The span at serine 699–serine 710 shows a compositional bias: low complexity. The interval serine 699–methionine 740 is disordered. HEAT repeat units lie at residues proline 957–threonine 996, tyrosine 1139–valine 1177, threonine 1181–aspartate 1216, and leucine 1219–leucine 1257. One can recognise a Helicase ATP-binding domain in the interval alanine 1316 to glycine 1489. Aspartate 1329–threonine 1336 is a binding site for ATP. The DEAH box signature appears at aspartate 1440–histidine 1443. An HEAT 8 repeat occupies glutamate 1526–arginine 1565. The Helicase C-terminal domain occupies aspartate 1663 to glycine 1813.

It belongs to the SNF2/RAD54 helicase family. Forms the NCT transcriptional regulatory complex with nctA and nctB.

The protein resides in the nucleus. Functionally, regulates transcription in association with TATA binding protein (TBP). Removes TBP from the TATA box via its C-terminal ATPase activity. Both transcription activation and repression require its ATPase activity. Part of the NCT transcriptional regulatory complex that acts as a key regulator of ergosterol biosynthesis and the azole exporter cdr1B. The NCT complex binds the promoters of genes linked to azole susceptibility, and especially represses the expression of cdr1B transporter. The protein is TATA-binding protein-associated factor mot1 of Aspergillus fumigatus (strain ATCC MYA-4609 / CBS 101355 / FGSC A1100 / Af293) (Neosartorya fumigata).